We begin with the raw amino-acid sequence, 312 residues long: Cathepsin O (312 aa).

A signal peptide spans 1 to 23; it reads MKPQLVNLLLLCCCCLGRHGVAG. Residues 24 to 98 constitute a propeptide, activation peptide; the sequence is TWSWSHQREA…EGQRPIPNVS (75 aa). Asn-53 and Asn-96 each carry an N-linked (GlcNAc...) asparagine glycan. 3 disulfide bridges follow: Cys-120/Cys-161, Cys-154/Cys-195, and Cys-253/Cys-301. Residue Cys-123 is part of the active site. Residues His-260 and Asn-280 contribute to the active site.

It belongs to the peptidase C1 family.

The protein localises to the lysosome. The enzyme catalyses The recombinant human enzyme hydrolyzes synthetic endopeptidase substrates including Z-Phe-Arg-NHMec and Z-Arg-Arg-NHMec.. Proteolytic enzyme possibly involved in normal cellular protein degradation and turnover. The protein is Cathepsin O (Ctso) of Mus musculus (Mouse).